The chain runs to 172 residues: Translation initiation factor IF-3 (172 aa).

It belongs to the IF-3 family. Monomer.

Its subcellular location is the cytoplasm. Its function is as follows. IF-3 binds to the 30S ribosomal subunit and shifts the equilibrium between 70S ribosomes and their 50S and 30S subunits in favor of the free subunits, thus enhancing the availability of 30S subunits on which protein synthesis initiation begins. This is Translation initiation factor IF-3 from Geobacter sulfurreducens (strain ATCC 51573 / DSM 12127 / PCA).